A 491-amino-acid chain; its full sequence is Ketol-acid reductoisomerase (NADP(+)) (491 aa).

The KARI N-terminal Rossmann domain occupies 17 to 208 (LGKCRFMSRD…GGHRAGVLES (192 aa)). NADP(+) contacts are provided by residues 45-48 (CGAQ), arginine 68, arginine 76, serine 78, and 108-110 (DKQ). The active site involves histidine 132. Residue glycine 158 coordinates NADP(+). KARI C-terminal knotted domains are found at residues 209-344 (SFVA…NYPE) and 345-484 (YEGK…MTDM). Mg(2+) contacts are provided by aspartate 217, glutamate 221, glutamate 389, and glutamate 393. Serine 414 provides a ligand contact to substrate.

Belongs to the ketol-acid reductoisomerase family. It depends on Mg(2+) as a cofactor.

The enzyme catalyses (2R)-2,3-dihydroxy-3-methylbutanoate + NADP(+) = (2S)-2-acetolactate + NADPH + H(+). The catalysed reaction is (2R,3R)-2,3-dihydroxy-3-methylpentanoate + NADP(+) = (S)-2-ethyl-2-hydroxy-3-oxobutanoate + NADPH + H(+). It functions in the pathway amino-acid biosynthesis; L-isoleucine biosynthesis; L-isoleucine from 2-oxobutanoate: step 2/4. The protein operates within amino-acid biosynthesis; L-valine biosynthesis; L-valine from pyruvate: step 2/4. Its function is as follows. Involved in the biosynthesis of branched-chain amino acids (BCAA). Catalyzes an alkyl-migration followed by a ketol-acid reduction of (S)-2-acetolactate (S2AL) to yield (R)-2,3-dihydroxy-isovalerate. In the isomerase reaction, S2AL is rearranged via a Mg-dependent methyl migration to produce 3-hydroxy-3-methyl-2-ketobutyrate (HMKB). In the reductase reaction, this 2-ketoacid undergoes a metal-dependent reduction by NADPH to yield (R)-2,3-dihydroxy-isovalerate. In Proteus mirabilis (strain HI4320), this protein is Ketol-acid reductoisomerase (NADP(+)).